A 430-amino-acid chain; its full sequence is Glutamate-1-semialdehyde 2,1-aminomutase (430 aa).

Position 265 is an N6-(pyridoxal phosphate)lysine (K265).

Belongs to the class-III pyridoxal-phosphate-dependent aminotransferase family. HemL subfamily. In terms of assembly, homodimer. It depends on pyridoxal 5'-phosphate as a cofactor.

It is found in the cytoplasm. It carries out the reaction (S)-4-amino-5-oxopentanoate = 5-aminolevulinate. It participates in porphyrin-containing compound metabolism; protoporphyrin-IX biosynthesis; 5-aminolevulinate from L-glutamyl-tRNA(Glu): step 2/2. This chain is Glutamate-1-semialdehyde 2,1-aminomutase, found in Shewanella sp. (strain MR-7).